The chain runs to 1227 residues: MSSKVEQLRAQLNERILVLDGGMGTMIQSYRLHEEDFRGERFADWPCDLKGNNDLLVLSKPEVIAAIHNAYFEAGADIIETNTFNSTTIAMADYRMESLSAEINYAAAKLARACADEWTARTPEKPRFVAGVLGPTNRTASISPDVNDPAFRNITFDQLVAAYRESTKALVEGGADLILIETVFDTLNAKAAVFAVKEEFEALGVDLPIMISGTITDASGRTLSGQTTEAFYNSLRHAEALTFGLNCALGPDELRQYVQELSRIAECYVTAHPNAGLPNAFGEYDLDADTMAKQIREWAEAGFLNIVGGCCGTTPEHIAAMSRAVAGLLPRQLPDIPVACRLSGLEPLNIGDDSLFVNVGERTNVTGSAKFKRLIKEEKYSEALDVARQQVESGAQIIDINMDEGMLDAEAAMVRFLSLIAGEPDIARVPIMIDSSKWEVIEKGLKCIQGKGIVNSISMKEGVEAFIHHAKLLRRYGAAVVVMAFDEQGQADTRARKIEICRRAYKILTEEVGFPPEDIIFDPNIFAVATGIEEHNNYAQDFIGACEDIKRELPHALISGGVSNVSFSFRGNDPVREAIHAVFLYYAIRNGMDMGIVNAGQLAIYDDLPAELRDAVEDVILNRRDDGTERLLDLAEKYRGSKTDEAANAQQAEWRSWDVKKRLEYSLVKGITEFIEQDTEEARQQAARPIEVIEGPLMDGMNVVGDLFGEGKMFLPQVVKSARVMKQAVAYLEPFIEASKEKGSSNGKMVIATVKGDVHDIGKNIVGVVLQCNNYEIVDLGVMVPAEKILRTAREVNADLIGLSGLITPSLDEMVNVAKEMERQGFTIPLLIGGATTSKAHTAVKIEQNYSGPTVYVQNASRTVGVVAALLSDTQRDDFVARTRKEYETVRIQHARKKPRTPPVTLEAARDNDLAFDWERYTPPVAHRLGVQEVEASIETLRNYIDWTPFFMTWSLAGKYPRILEDEVVGVEAQRLFKDANDMLDKLSAEKLLNPRGVVGLFPANRVGDDIEIYRDETRTHVLTVSHHLRQQTEKVGFANYCLADFVAPKLSGKADYIGAFAVTGGLEEDALADAFEAQHDDYNKIMVKAIADRLAEAFAEYLHERVRKVYWGYAPNESLSNDELIRENYQGIRPAPGYPACPEHTEKGTIWQLLDVEKHTGMKLTESFAMWPGASVSGWYFSHPESKYFAVAQIQRDQVTDYAFRKGMSVEDVERWLAPNLGYDAD.

The 324-residue stretch at 2-325 folds into the Hcy-binding domain; the sequence is SSKVEQLRAQ…EHIAAMSRAV (324 aa). Zn(2+)-binding residues include cysteine 247, cysteine 310, and cysteine 311. In terms of domain architecture, Pterin-binding spans 356 to 617; it reads FVNVGERTNV…LPAELRDAVE (262 aa). The B12-binding N-terminal domain occupies 650 to 744; that stretch reads QQAEWRSWDV…FIEASKEKGS (95 aa). Residues glutamate 694, 756 to 760, histidine 759, serine 804, threonine 808, and alanine 860 contribute to the methylcob(III)alamin site; that span reads GDVHD. In terms of domain architecture, B12-binding spans 746–881; sequence NGKMVIATVK…SDTQRDDFVA (136 aa). The AdoMet activation domain occupies 897–1227; it reads KKPRTPPVTL…LAPNLGYDAD (331 aa). S-adenosyl-L-methionine contacts are provided by residues aspartate 946, arginine 1134, and 1189–1190; that span reads YF.

It belongs to the vitamin-B12 dependent methionine synthase family. Methylcob(III)alamin serves as cofactor. Zn(2+) is required as a cofactor.

The enzyme catalyses (6S)-5-methyl-5,6,7,8-tetrahydrofolate + L-homocysteine = (6S)-5,6,7,8-tetrahydrofolate + L-methionine. It participates in amino-acid biosynthesis; L-methionine biosynthesis via de novo pathway; L-methionine from L-homocysteine (MetH route): step 1/1. In terms of biological role, catalyzes the transfer of a methyl group from methyl-cobalamin to homocysteine, yielding enzyme-bound cob(I)alamin and methionine. Subsequently, remethylates the cofactor using methyltetrahydrofolate. The sequence is that of Methionine synthase (metH) from Salmonella typhimurium (strain LT2 / SGSC1412 / ATCC 700720).